A 211-amino-acid polypeptide reads, in one-letter code: HTH-type transcriptional repressor FabR (211 aa).

In terms of domain architecture, HTH tetR-type spans R10–L70. The segment at residues S33–F52 is a DNA-binding region (H-T-H motif).

Homodimer.

It localises to the cytoplasm. In terms of biological role, represses the transcription of fabB, involved in unsaturated fatty acid (UFA) biosynthesis. By controlling UFA production, FabR directly influences the physical properties of the membrane bilayer. The sequence is that of HTH-type transcriptional repressor FabR from Yersinia pseudotuberculosis serotype O:1b (strain IP 31758).